A 385-amino-acid chain; its full sequence is Probable tRNA sulfurtransferase (385 aa).

The 104-residue stretch at Asp57–Lys160 folds into the THUMP domain. ATP-binding positions include Met180–Leu181, Tyr205–Tyr206, Arg262, Gly284, and Gln293.

The protein belongs to the ThiI family.

The protein resides in the cytoplasm. It carries out the reaction [ThiI sulfur-carrier protein]-S-sulfanyl-L-cysteine + a uridine in tRNA + 2 reduced [2Fe-2S]-[ferredoxin] + ATP + H(+) = [ThiI sulfur-carrier protein]-L-cysteine + a 4-thiouridine in tRNA + 2 oxidized [2Fe-2S]-[ferredoxin] + AMP + diphosphate. The catalysed reaction is [ThiS sulfur-carrier protein]-C-terminal Gly-Gly-AMP + S-sulfanyl-L-cysteinyl-[cysteine desulfurase] + AH2 = [ThiS sulfur-carrier protein]-C-terminal-Gly-aminoethanethioate + L-cysteinyl-[cysteine desulfurase] + A + AMP + 2 H(+). It functions in the pathway cofactor biosynthesis; thiamine diphosphate biosynthesis. Catalyzes the ATP-dependent transfer of a sulfur to tRNA to produce 4-thiouridine in position 8 of tRNAs, which functions as a near-UV photosensor. Also catalyzes the transfer of sulfur to the sulfur carrier protein ThiS, forming ThiS-thiocarboxylate. This is a step in the synthesis of thiazole, in the thiamine biosynthesis pathway. The sulfur is donated as persulfide by IscS. In Clostridium perfringens (strain SM101 / Type A), this protein is Probable tRNA sulfurtransferase.